Here is a 966-residue protein sequence, read N- to C-terminus: Isoleucine--tRNA ligase (966 aa).

Over residues 1 to 16 the composition is skewed to basic and acidic residues; that stretch reads MSDDKRAKSDKNEKNK. The segment at 1–24 is disordered; the sequence is MSDDKRAKSDKNEKNKYPVNLLDT. The 'HIGH' region signature appears at 69–79; the sequence is PYANGDIHIGH. Position 599 (glutamate 599) interacts with L-isoleucyl-5'-AMP. Residues 640 to 644 carry the 'KMSKS' region motif; it reads KMSKS. Lysine 643 provides a ligand contact to ATP. Positions 929, 932, 949, and 952 each coordinate Zn(2+).

It belongs to the class-I aminoacyl-tRNA synthetase family. IleS type 1 subfamily. As to quaternary structure, monomer. It depends on Zn(2+) as a cofactor.

The protein resides in the cytoplasm. It carries out the reaction tRNA(Ile) + L-isoleucine + ATP = L-isoleucyl-tRNA(Ile) + AMP + diphosphate. Catalyzes the attachment of isoleucine to tRNA(Ile). As IleRS can inadvertently accommodate and process structurally similar amino acids such as valine, to avoid such errors it has two additional distinct tRNA(Ile)-dependent editing activities. One activity is designated as 'pretransfer' editing and involves the hydrolysis of activated Val-AMP. The other activity is designated 'posttransfer' editing and involves deacylation of mischarged Val-tRNA(Ile). This Cupriavidus taiwanensis (strain DSM 17343 / BCRC 17206 / CCUG 44338 / CIP 107171 / LMG 19424 / R1) (Ralstonia taiwanensis (strain LMG 19424)) protein is Isoleucine--tRNA ligase.